A 165-amino-acid chain; its full sequence is Pro-MCH (165 aa).

Residues 1-21 form the signal peptide; the sequence is MAKMTLSSYMLMLAFSLFSQG. The interval 66–89 is disordered; it reads YKNDESGFMNDDDNKNSKNTGSKQ. Isoleucine 143 is subject to Isoleucine amide. An intrachain disulfide couples cysteine 153 to cysteine 162.

This sequence belongs to the MCH family. In terms of processing, pro-MCH is processed differentially in the brain and in peripheral organs producing two neuropeptides; NEI and MCH. A third peptide, NGE, may also be produced. Preferential processing in neurons by prohormone convertase 2 (PC2) generates NEI. MCH is generated in neurons of the lateral hypothalmic area by several prohormone convertases including PC1/3, PC2 and PC5/6. In terms of tissue distribution, predominantly expressed in hypothalamus. Also found in heart, intestine, spleen and testis (spermatogonia, early spermatocytes and Sertoli cells). In brain only mature MCH and NEI peptides are present. In peripheral tissues a large product, encompassing the NEI and MCH domains of the precursor, is found predominantly.

The protein resides in the secreted. In terms of biological role, MCH may act as a neurotransmitter or neuromodulator in a broad array of neuronal functions directed toward the regulation of goal-directed behavior, such as food intake, and general arousal. The polypeptide is Pro-MCH (Pmch) (Mus musculus (Mouse)).